The following is a 236-amino-acid chain: MEPGGSENAAALWISEGGRGPGRGPGPEWTSRSLLPQSGPALQPTPYSQRKGPRETHPDALKGGGGWGWGNTQSLSGECRKGVGAGEEKDGAAVSLSTPHLLAASAGLQPAPSPLGTAVCPFSPHSSPSFSHHRTLSLFISPAPLSCPAPRAQVHRSTPMGRALLTRVLLEPLRPWACPRLPRSPPGGAQSGRGGALAQPTLRCAAAPLRAWAWRSSDPPPAFSVFCHPPRGFDIS.

Positions 1–73 (MEPGGSENAA…GGGWGWGNTQ (73 aa)) are disordered.

This is an uncharacterized protein from Homo sapiens (Human).